A 132-amino-acid polypeptide reads, in one-letter code: Small ribosomal subunit protein uS19 (132 aa).

This sequence belongs to the universal ribosomal protein uS19 family. Part of the 30S ribosomal subunit.

Its function is as follows. Protein S19 forms a complex with S13 that binds strongly to the 16S ribosomal RNA. The protein is Small ribosomal subunit protein uS19 of Pyrococcus furiosus (strain ATCC 43587 / DSM 3638 / JCM 8422 / Vc1).